The chain runs to 200 residues: MSRYTGPSWKLSRRLGISLSGTGKEIEKRPYAPGQHGPNQRKKLSEYGLQLQEKQKLRHMYGMNERQFRTLFNRAGKMKGVHGENFMILLETRLDNLVYRLGLARTRRGARQLVNHGHILVDGKRVDIPSFSVKPGQTISLREKSQNLAVVGEAIEVNNFVPDYLTFDADKKEGTFTRLPERSELSAEINESFIVEYYSR.

The interval 22-41 is disordered; sequence TGKEIEKRPYAPGQHGPNQR. Residues 92-152 enclose the S4 RNA-binding domain; the sequence is TRLDNLVYRL…EKSQNLAVVG (61 aa).

It belongs to the universal ribosomal protein uS4 family. In terms of assembly, part of the 30S ribosomal subunit. Contacts protein S5. The interaction surface between S4 and S5 is involved in control of translational fidelity.

Functionally, one of the primary rRNA binding proteins, it binds directly to 16S rRNA where it nucleates assembly of the body of the 30S subunit. Its function is as follows. With S5 and S12 plays an important role in translational accuracy. The chain is Small ribosomal subunit protein uS4 from Lysinibacillus sphaericus (strain C3-41).